We begin with the raw amino-acid sequence, 223 residues long: Ribose-5-phosphate isomerase A (223 aa).

Substrate contacts are provided by residues 32–35 (TGST), 83–86 (DGAD), and 96–99 (KGGG). E105 acts as the Proton acceptor in catalysis. K123 contributes to the substrate binding site.

Belongs to the ribose 5-phosphate isomerase family. Homodimer.

The enzyme catalyses aldehydo-D-ribose 5-phosphate = D-ribulose 5-phosphate. It participates in carbohydrate degradation; pentose phosphate pathway; D-ribose 5-phosphate from D-ribulose 5-phosphate (non-oxidative stage): step 1/1. Its function is as follows. Catalyzes the reversible conversion of ribose-5-phosphate to ribulose 5-phosphate. The protein is Ribose-5-phosphate isomerase A of Acinetobacter baumannii (strain SDF).